The sequence spans 525 residues: Phosphatidylinositol 4-kinase alpha 2 (525 aa).

Residues 163 to 278 (SDVRQHIVDG…VKPQACIFKV (116 aa)) form a pleckstrin homology (PH) domain conferring phosphoinositide binding specificity region. One can recognise a PI3K/PI4K catalytic domain in the interval 239–509 (VDSGIPLQSA…VCTDAYNKWT (271 aa)). Positions 245–251 (LQSAAKV) are G-loop. The interval 373-381 (QPKDRHNGN) is catalytic loop. The segment at 392-417 (HIDFGFILETSPGGNMRFENAHFKLS) is activation loop.

Belongs to the PI3/PI4-kinase family. Type III PI4K subfamily.

It is found in the membrane. It catalyses the reaction a 1,2-diacyl-sn-glycero-3-phospho-(1D-myo-inositol) + ATP = a 1,2-diacyl-sn-glycero-3-phospho-(1D-myo-inositol 4-phosphate) + ADP + H(+). Functionally, acts on phosphatidylinositol (PtdIns) in the first committed step in the production of the second messenger inositol-1,4,5,-trisphosphate. The protein is Phosphatidylinositol 4-kinase alpha 2 (PI4KA2) of Arabidopsis thaliana (Mouse-ear cress).